The following is a 74-amino-acid chain: MGGISIWQLLIIVAIIVLLFGTKKLRTLGTDLGESVKGFKKAMAEDKSQDANFDKVEAKESTSTTEKTKEKEQA.

Residues Met-1–Gly-21 form a helical membrane-spanning segment. A disordered region spans residues Ala-51–Ala-74.

This sequence belongs to the TatA/E family. In terms of assembly, the Tat system comprises two distinct complexes: a TatABC complex, containing multiple copies of TatA, TatB and TatC subunits, and a separate TatA complex, containing only TatA subunits. Substrates initially bind to the TatABC complex, which probably triggers association of the separate TatA complex to form the active translocon.

It localises to the cell inner membrane. In terms of biological role, part of the twin-arginine translocation (Tat) system that transports large folded proteins containing a characteristic twin-arginine motif in their signal peptide across membranes. TatA could form the protein-conducting channel of the Tat system. In Haemophilus ducreyi (strain 35000HP / ATCC 700724), this protein is Sec-independent protein translocase protein TatA.